The primary structure comprises 423 residues: D-tagatose-1,6-bisphosphate aldolase subunit GatZ (423 aa).

Belongs to the GatZ/KbaZ family. GatZ subfamily. In terms of assembly, forms a complex with GatY.

It participates in carbohydrate metabolism; D-tagatose 6-phosphate degradation; D-glyceraldehyde 3-phosphate and glycerone phosphate from D-tagatose 6-phosphate: step 2/2. Component of the tagatose-1,6-bisphosphate aldolase GatYZ that is required for full activity and stability of the Y subunit. Could have a chaperone-like function for the proper and stable folding of GatY. When expressed alone, GatZ does not show any aldolase activity. Is involved in the catabolism of galactitol. This chain is D-tagatose-1,6-bisphosphate aldolase subunit GatZ, found in Salmonella typhimurium (strain LT2 / SGSC1412 / ATCC 700720).